The primary structure comprises 83 residues: Large ribosomal subunit protein bL27 (83 aa).

Residues 1–25 (MAHKKGQGASRNGRDSESKRLGLKV) are disordered.

This sequence belongs to the bacterial ribosomal protein bL27 family.

This chain is Large ribosomal subunit protein bL27, found in Chlamydia trachomatis serovar L2 (strain ATCC VR-902B / DSM 19102 / 434/Bu).